The chain runs to 148 residues: Putative nickel-responsive regulator (148 aa).

4 residues coordinate Ni(2+): His-88, His-99, His-101, and Cys-107.

This sequence belongs to the transcriptional regulatory CopG/NikR family. Homotetramer. Ni(2+) serves as cofactor.

Its function is as follows. Transcriptional regulator. The chain is Putative nickel-responsive regulator from Helicobacter pylori (strain J99 / ATCC 700824) (Campylobacter pylori J99).